A 360-amino-acid polypeptide reads, in one-letter code: Phospho-N-acetylmuramoyl-pentapeptide-transferase (360 aa).

10 helical membrane-spanning segments follow: residues 27 to 47 (GALI…INSL), 71 to 91 (TPTM…LLWA), 93 to 113 (LSSI…SIGF), 134 to 154 (LGLE…NGQA), 168 to 188 (FIIN…VGAG), 199 to 219 (GLAI…AYLS), 239 to 259 (LAVV…FNAP), 262 to 282 (AIFM…TVAV), 288 to 308 (IVLV…IIQV), and 337 to 357 (QVVI…LSTL).

Belongs to the glycosyltransferase 4 family. MraY subfamily. Mg(2+) serves as cofactor.

Its subcellular location is the cell inner membrane. It catalyses the reaction UDP-N-acetyl-alpha-D-muramoyl-L-alanyl-gamma-D-glutamyl-meso-2,6-diaminopimeloyl-D-alanyl-D-alanine + di-trans,octa-cis-undecaprenyl phosphate = di-trans,octa-cis-undecaprenyl diphospho-N-acetyl-alpha-D-muramoyl-L-alanyl-D-glutamyl-meso-2,6-diaminopimeloyl-D-alanyl-D-alanine + UMP. It functions in the pathway cell wall biogenesis; peptidoglycan biosynthesis. Functionally, catalyzes the initial step of the lipid cycle reactions in the biosynthesis of the cell wall peptidoglycan: transfers peptidoglycan precursor phospho-MurNAc-pentapeptide from UDP-MurNAc-pentapeptide onto the lipid carrier undecaprenyl phosphate, yielding undecaprenyl-pyrophosphoryl-MurNAc-pentapeptide, known as lipid I. This is Phospho-N-acetylmuramoyl-pentapeptide-transferase from Mesorhizobium japonicum (strain LMG 29417 / CECT 9101 / MAFF 303099) (Mesorhizobium loti (strain MAFF 303099)).